We begin with the raw amino-acid sequence, 503 residues long: Aspartyl/glutamyl-tRNA(Asn/Gln) amidotransferase subunit B (503 aa).

This sequence belongs to the GatB/GatE family. GatB subfamily. As to quaternary structure, heterotrimer of A, B and C subunits.

It catalyses the reaction L-glutamyl-tRNA(Gln) + L-glutamine + ATP + H2O = L-glutaminyl-tRNA(Gln) + L-glutamate + ADP + phosphate + H(+). It carries out the reaction L-aspartyl-tRNA(Asn) + L-glutamine + ATP + H2O = L-asparaginyl-tRNA(Asn) + L-glutamate + ADP + phosphate + 2 H(+). In terms of biological role, allows the formation of correctly charged Asn-tRNA(Asn) or Gln-tRNA(Gln) through the transamidation of misacylated Asp-tRNA(Asn) or Glu-tRNA(Gln) in organisms which lack either or both of asparaginyl-tRNA or glutaminyl-tRNA synthetases. The reaction takes place in the presence of glutamine and ATP through an activated phospho-Asp-tRNA(Asn) or phospho-Glu-tRNA(Gln). The protein is Aspartyl/glutamyl-tRNA(Asn/Gln) amidotransferase subunit B of Mycobacterium avium (strain 104).